A 517-amino-acid chain; its full sequence is N-acetylglucosamine-1-phosphodiester alpha-N-acetylglucosaminidase (517 aa).

An N-terminal signal peptide occupies residues 1–25 (MAAPRGPGLFLIPALLGLLGVAWCS). A propeptide spans 26 to 49 (LSFGVSRDDDLLLPYPLARRRPSR) (removed in mature form). Positions 49–75 (RDCARVRSGSPEQESWPPPPTNPGASH) are disordered. The Lumenal portion of the chain corresponds to 50–453 (DCARVRSGSP…ASFTRTTWLA (404 aa)). Cystine bridges form between C116–C149, C133–C324, C308–C315, C363–C374, and C381–C390. 2 N-linked (GlcNAc...) asparagine glycosylation sites follow: N215 and N297. The 33-residue stretch at 359–391 (SELDCGPSNCSQHGLCTETGCHCDAGWTGSNCS) folds into the EGF-like domain. 3 N-linked (GlcNAc...) asparagine glycosylation sites follow: N367, N389, and N421. Residues 454 to 474 (LTLTLIFLLLISTGVNVSLFL) form a helical membrane-spanning segment. At 475-517 (GSRAERNRHLDGDYVYHPLQEVNGEALTAEKEHMEETSNPFKD) the chain is on the cytoplasmic side. The short motif at 488-491 (YVYH) is the Tyrosine-based internalization motif element. The segment at 488–495 (YVYHPLQE) is mediates the interaction with AP4M1. The NPF internalization motif signature appears at 511 to 515 (TSNPF).

Homotetramer arranged as two disulfide-linked homodimers. Interacts with AP4M1. Post-translationally, the precursor is cleaved and activated in the trans-Golgi network by a furin endopeptidase.

The protein resides in the golgi apparatus. The protein localises to the golgi stack membrane. It is found in the trans-Golgi network. It carries out the reaction N(4)-[6-(N-acetyl-alpha-D-glucosaminyl-1-phospho)-alpha-D-mannosyl-(1-&gt;2)-alpha-D-mannosyl-(glycan)]-L-asparaginyl-[protein] + H2O = N(4)-[6-phospho-alpha-D-mannosyl-(1-&gt;2)-alpha-D-mannosyl-(glycan)]-L-asparaginyl-[protein] + N-acetyl-D-glucosamine + H(+). Its pathway is protein modification; protein glycosylation. Catalyzes the second step in the formation of the mannose 6-phosphate targeting signal on lysosomal enzyme oligosaccharides by removing GlcNAc residues from GlcNAc-alpha-P-mannose moieties, which are formed in the first step. Also hydrolyzes UDP-GlcNAc, a sugar donor for Golgi N-acetylglucosaminyltransferases. This chain is N-acetylglucosamine-1-phosphodiester alpha-N-acetylglucosaminidase (Nagpa), found in Mus musculus (Mouse).